We begin with the raw amino-acid sequence, 446 residues long: MSDKRRYFGTDGVRGKVGQYPITPDFVLKLGWAAGRVLAKQGTKKVIIGKDTRISGYMLESALEAGLAAAGLKATFTGPMPTPAVAYLTQTFRAEAGIVISASHNPYYDNGIKFFSSEGTKLPDDIELAIEAELDKDIECVESAELGKATRLNDAAGRYIEFCKSTFPSDLSLANVKIVVDCAHGATYHIAPNVFKELGADVVAMGVEPNGTNINAEVGATDVRALQKRVVEEQAHLGLAFDGDGDRIIMVDHLGNKIDGDQIAYIIARDALRRGELKGGVVGTLMTNLGMENGLKQLGIPFVRAAVGDRYVMEQLLAKGWKIGAENSGHVILLDKVTTGDAIVAALQVLASVVGSEMTLHDLSQGMTLYPQVLENVRFVGNSNPLEAQAVLDSVAAVEAELGDKGRVLLRKSGTEPLIRVMVEGEDAELVQSSALKIAEAVKASC.

S103 functions as the Phosphoserine intermediate in the catalytic mechanism. Mg(2+) is bound by residues S103, D242, D244, and D246. Residue S103 is modified to Phosphoserine.

This sequence belongs to the phosphohexose mutase family. Requires Mg(2+) as cofactor. Post-translationally, activated by phosphorylation.

The catalysed reaction is alpha-D-glucosamine 1-phosphate = D-glucosamine 6-phosphate. Its function is as follows. Catalyzes the conversion of glucosamine-6-phosphate to glucosamine-1-phosphate. The protein is Phosphoglucosamine mutase of Vibrio campbellii (strain ATCC BAA-1116).